We begin with the raw amino-acid sequence, 266 residues long: Phosphatidylglycerol--prolipoprotein diacylglyceryl transferase (266 aa).

Transmembrane regions (helical) follow at residues 21–41, 60–80, 95–115, 124–144, 176–196, 203–223, and 236–256; these read LAIR…MWLA, LLFA…VLFY, VWTG…AMLW, FFSV…MGRM, SQLY…NIFI, GAVS…IEYF, and WISM…LLML. R143 lines the a 1,2-diacyl-sn-glycero-3-phospho-(1'-sn-glycerol) pocket.

Belongs to the Lgt family.

It localises to the cell inner membrane. It catalyses the reaction L-cysteinyl-[prolipoprotein] + a 1,2-diacyl-sn-glycero-3-phospho-(1'-sn-glycerol) = an S-1,2-diacyl-sn-glyceryl-L-cysteinyl-[prolipoprotein] + sn-glycerol 1-phosphate + H(+). The protein operates within protein modification; lipoprotein biosynthesis (diacylglyceryl transfer). Functionally, catalyzes the transfer of the diacylglyceryl group from phosphatidylglycerol to the sulfhydryl group of the N-terminal cysteine of a prolipoprotein, the first step in the formation of mature lipoproteins. The sequence is that of Phosphatidylglycerol--prolipoprotein diacylglyceryl transferase from Photobacterium profundum (strain SS9).